Consider the following 458-residue polypeptide: ATP synthase subunit beta (458 aa).

Position 148–155 (148–155) interacts with ATP; sequence GGAGVGKT.

It belongs to the ATPase alpha/beta chains family. In terms of assembly, F-type ATPases have 2 components, CF(1) - the catalytic core - and CF(0) - the membrane proton channel. CF(1) has five subunits: alpha(3), beta(3), gamma(1), delta(1), epsilon(1). CF(0) has three main subunits: a(1), b(2) and c(9-12). The alpha and beta chains form an alternating ring which encloses part of the gamma chain. CF(1) is attached to CF(0) by a central stalk formed by the gamma and epsilon chains, while a peripheral stalk is formed by the delta and b chains.

Its subcellular location is the cell inner membrane. The catalysed reaction is ATP + H2O + 4 H(+)(in) = ADP + phosphate + 5 H(+)(out). Functionally, produces ATP from ADP in the presence of a proton gradient across the membrane. The catalytic sites are hosted primarily by the beta subunits. In Pseudomonas putida (strain ATCC 700007 / DSM 6899 / JCM 31910 / BCRC 17059 / LMG 24140 / F1), this protein is ATP synthase subunit beta.